Here is a 121-residue protein sequence, read N- to C-terminus: Large ribosomal subunit protein bL19 (121 aa).

Belongs to the bacterial ribosomal protein bL19 family.

This protein is located at the 30S-50S ribosomal subunit interface and may play a role in the structure and function of the aminoacyl-tRNA binding site. The protein is Large ribosomal subunit protein bL19 of Chloroherpeton thalassium (strain ATCC 35110 / GB-78).